Reading from the N-terminus, the 212-residue chain is Large ribosomal subunit protein uL3 (212 aa).

This sequence belongs to the universal ribosomal protein uL3 family. Part of the 50S ribosomal subunit. Forms a cluster with proteins L14 and L19.

Its function is as follows. One of the primary rRNA binding proteins, it binds directly near the 3'-end of the 23S rRNA, where it nucleates assembly of the 50S subunit. The sequence is that of Large ribosomal subunit protein uL3 from Acetivibrio thermocellus (strain ATCC 27405 / DSM 1237 / JCM 9322 / NBRC 103400 / NCIMB 10682 / NRRL B-4536 / VPI 7372) (Clostridium thermocellum).